The following is a 427-amino-acid chain: Ectoine TRAP transporter large permease protein TeaC (427 aa).

A run of 12 helical transmembrane segments spans residues 13 to 35, 49 to 69, 79 to 99, 103 to 123, 147 to 167, 172 to 192, 216 to 236, 237 to 257, 273 to 293, 320 to 340, 356 to 376, and 400 to 420; these read LLLG…FMMF, MAGI…AADI, LINM…VSTA, TLFG…GSPL, IAFL…SGTS, FIAG…YCVI, LALW…GGIF, SPTE…FVVF, GLIT…SWII, ICVA…ILVL, VLVG…PPFG, and FIFM…IALF.

Belongs to the TRAP transporter large permease family. In terms of assembly, the complex comprises the extracytoplasmic solute receptor protein TeaA, and the two transmembrane proteins TeaB and TeaC.

Its subcellular location is the cell inner membrane. Part of the tripartite ATP-independent periplasmic (TRAP) transport system TeaABC involved in the uptake of ectoine and hydroxyectoine in response to osmotic upshock. Probably functions as a recovery system for synthesized ectoine that leaks out of the cell. The protein is Ectoine TRAP transporter large permease protein TeaC (teaC) of Halomonas elongata (strain ATCC 33173 / DSM 2581 / NBRC 15536 / NCIMB 2198 / 1H9).